Reading from the N-terminus, the 336-residue chain is Formimidoylglutamase (336 aa).

The span at 1-10 shows a compositional bias: polar residues; sequence MNPNFTTEHT. Residues 1–22 are disordered; sequence MNPNFTTEHTWQGRHDPEDGQA. The segment covering 11-22 has biased composition (basic and acidic residues); that stretch reads WQGRHDPEDGQA. Residues histidine 127, aspartate 157, histidine 159, aspartate 161, aspartate 254, and aspartate 256 each contribute to the Mn(2+) site.

This sequence belongs to the arginase family. Requires Mn(2+) as cofactor.

The catalysed reaction is N-formimidoyl-L-glutamate + H2O = formamide + L-glutamate. It participates in amino-acid degradation; L-histidine degradation into L-glutamate; L-glutamate from N-formimidoyl-L-glutamate (hydrolase route): step 1/1. In terms of biological role, catalyzes the conversion of N-formimidoyl-L-glutamate to L-glutamate and formamide. This Vibrio cholerae serotype O1 (strain ATCC 39541 / Classical Ogawa 395 / O395) protein is Formimidoylglutamase.